A 282-amino-acid polypeptide reads, in one-letter code: Bifunctional protein FolD (282 aa).

NADP(+)-binding positions include 165–167 (GRS), serine 190, and threonine 231.

Belongs to the tetrahydrofolate dehydrogenase/cyclohydrolase family. In terms of assembly, homodimer.

It carries out the reaction (6R)-5,10-methylene-5,6,7,8-tetrahydrofolate + NADP(+) = (6R)-5,10-methenyltetrahydrofolate + NADPH. The catalysed reaction is (6R)-5,10-methenyltetrahydrofolate + H2O = (6R)-10-formyltetrahydrofolate + H(+). It functions in the pathway one-carbon metabolism; tetrahydrofolate interconversion. In terms of biological role, catalyzes the oxidation of 5,10-methylenetetrahydrofolate to 5,10-methenyltetrahydrofolate and then the hydrolysis of 5,10-methenyltetrahydrofolate to 10-formyltetrahydrofolate. The protein is Bifunctional protein FolD of Clostridium botulinum (strain Eklund 17B / Type B).